A 234-amino-acid chain; its full sequence is Orotate phosphoribosyltransferase (234 aa).

Position 30 (Lys-30) interacts with 5-phospho-alpha-D-ribose 1-diphosphate. Residue 38 to 39 (FF) coordinates orotate. 5-phospho-alpha-D-ribose 1-diphosphate is bound by residues 80–81 (YK), Arg-110, Lys-111, Lys-114, His-116, and 136–144 (DDVITAGTA). The orotate site is built by Thr-140 and Arg-168.

The protein belongs to the purine/pyrimidine phosphoribosyltransferase family. PyrE subfamily. As to quaternary structure, homodimer.

It catalyses the reaction orotidine 5'-phosphate + diphosphate = orotate + 5-phospho-alpha-D-ribose 1-diphosphate. Its pathway is pyrimidine metabolism; UMP biosynthesis via de novo pathway; UMP from orotate: step 1/2. In terms of biological role, catalyzes the transfer of a ribosyl phosphate group from 5-phosphoribose 1-diphosphate to orotate, leading to the formation of orotidine monophosphate (OMP). The protein is Orotate phosphoribosyltransferase (URA5) of Metarhizium anisopliae (Entomophthora anisopliae).